A 131-amino-acid chain; its full sequence is Small ribosomal subunit protein uS10m (131 aa).

Belongs to the universal ribosomal protein uS10 family.

It is found in the mitochondrion. The protein is Small ribosomal subunit protein uS10m (mrps10) of Dictyostelium discoideum (Social amoeba).